Reading from the N-terminus, the 130-residue chain is MAQVQYYGTGRRKSSVARVRLVPGDGKIVINNRDWEDYIPFAALREVIKQPLVATETLGNYDVLVNVHGGGYTGQAGAIRHGVARALLQVAPEYRPALKSAGLLTRDSRMKERKKPGLKGARRAPQFSKR.

The tract at residues 102 to 130 (GLLTRDSRMKERKKPGLKGARRAPQFSKR) is disordered. A compositionally biased stretch (basic residues) spans 111 to 130 (KERKKPGLKGARRAPQFSKR).

It belongs to the universal ribosomal protein uS9 family.

The protein is Small ribosomal subunit protein uS9 of Listeria monocytogenes serovar 1/2a (strain ATCC BAA-679 / EGD-e).